The following is a 329-amino-acid chain: uncharacterized protein (329 aa).

The 144-residue stretch at 37–180 (LAEKILGHSG…AMLLFHSRGV (144 aa)) folds into the SIS domain. 52-57 (GVGKSG) provides a ligand contact to ATP. CBS domains are found at residues 206-265 (MFPK…GGEV) and 274-329 (MTAN…AGLL).

This sequence belongs to the SIS family. GutQ/KpsF subfamily.

This is an uncharacterized protein from Chlamydia pneumoniae (Chlamydophila pneumoniae).